Here is a 263-residue protein sequence, read N- to C-terminus: Proteasome subunit alpha type-1 (263 aa).

The residue at position 1 (Met1) is an N-acetylmethionine. The residue at position 110 (Ser110) is a Phosphoserine; alternate. O-linked (GlcNAc) serine; alternate glycosylation occurs at Ser110. Lys115 is covalently cross-linked (Glycyl lysine isopeptide (Lys-Gly) (interchain with G-Cter in ubiquitin)). A Phosphoserine modification is found at Ser177. Lys208 is covalently cross-linked (Glycyl lysine isopeptide (Lys-Gly) (interchain with G-Cter in ubiquitin)). Positions 232–263 are disordered; that stretch reads FLDGLEERPQRKAQPSQAADEPAEKADEPMEH. Positions 253-263 are enriched in basic and acidic residues; it reads PAEKADEPMEH.

This sequence belongs to the peptidase T1A family. As to quaternary structure, the 26S proteasome consists of a 20S proteasome core and two 19S regulatory subunits. The 20S proteasome core is a barrel-shaped complex made of 28 subunits that are arranged in four stacked rings. The two outer rings are each formed by seven alpha subunits, and the two inner rings are formed by seven beta subunits. The proteolytic activity is exerted by three beta-subunits PSMB5, PSMB6 and PSMB7. Interacts with NOTCH3. Interacts with ZFAND1. Post-translationally, proteolytically cleaved from a C-terminal extension in the course of the conversion of the proteasome from its latent form into its active form. In terms of tissue distribution, ubiquitous.

The protein resides in the cytoplasm. The protein localises to the nucleus. Functionally, component of the 20S core proteasome complex involved in the proteolytic degradation of most intracellular proteins. This complex plays numerous essential roles within the cell by associating with different regulatory particles. Associated with two 19S regulatory particles, forms the 26S proteasome and thus participates in the ATP-dependent degradation of ubiquitinated proteins. The 26S proteasome plays a key role in the maintenance of protein homeostasis by removing misfolded or damaged proteins that could impair cellular functions, and by removing proteins whose functions are no longer required. Associated with the PA200 or PA28, the 20S proteasome mediates ubiquitin-independent protein degradation. This type of proteolysis is required in several pathways including spermatogenesis (20S-PA200 complex) or generation of a subset of MHC class I-presented antigenic peptides (20S-PA28 complex). The chain is Proteasome subunit alpha type-1 (Psma1) from Rattus norvegicus (Rat).